Consider the following 718-residue polypeptide: SANT and BTB domain regulator of class switch recombination (718 aa).

The region spanning 21 to 59 (DMILYPLIGIPQTINWETIARLVPGLTPKECAKRFDELK) is the SANT domain. A compositionally biased stretch (polar residues) spans 118-134 (ASTRNCSSESENCTTHN). Positions 118 to 142 (ASTRNCSSESENCTTHNGGEMTEES) are disordered. The BTB domain maps to 147-255 (MVIHVCDEAK…QCIQYCHKNM (109 aa)). A compositionally biased stretch (acidic residues) spans 555–576 (SEEEEYTTGSEVTEDEVGDEEE). 2 disordered regions span residues 555 to 622 (SEEE…SPFV) and 692 to 718 (SVPV…GRPA). Positions 580–595 (KQRKKEKPKKFTRQPK) are enriched in basic residues. Basic and acidic residues predominate over residues 604–615 (QRKEKALEKSAS).

This sequence belongs to the KIAA1841 family. In terms of assembly, homodimer. Interacts (via the BTB domain) with HDAC1 and NCOR2.

In terms of biological role, negatively regulates class switch recombination or isotype switching in splenic B-cells. This chain is SANT and BTB domain regulator of class switch recombination, found in Homo sapiens (Human).